Consider the following 136-residue polypeptide: MPPFFDFLMSAGIAFFVFIISAIILPGFFIWIGLKVVGKERDVLRCGMANFAAVVITAVVAFILHFTPLVLLLPLLAFLIYLYVLKTLLDVGFIEAFAATIIAGVVIFLLAVILLLIFGVWLLFTPPPAQMMHVKF.

Helical transmembrane passes span 10–32 (SAGI…FIWI), 44–66 (LRCG…ILHF), 70–89 (VLLL…KTLL), and 102–124 (IAGV…WLLF).

It is found in the cell membrane. This is an uncharacterized protein from Archaeoglobus fulgidus (strain ATCC 49558 / DSM 4304 / JCM 9628 / NBRC 100126 / VC-16).